A 155-amino-acid chain; its full sequence is Small ribosomal subunit protein bS6 (155 aa).

Positions 94–155 are disordered; that stretch reads EEHETEPSAM…RDDNSDGGQE (62 aa). Basic and acidic residues predominate over residues 107–149; it reads RGDRGDRGDRRGGDRFGDRDRGDRGDRGSSRFGDRERPRRDDN.

Belongs to the bacterial ribosomal protein bS6 family.

Its function is as follows. Binds together with bS18 to 16S ribosomal RNA. The polypeptide is Small ribosomal subunit protein bS6 (Parvibaculum lavamentivorans (strain DS-1 / DSM 13023 / NCIMB 13966)).